Here is a 588-residue protein sequence, read N- to C-terminus: L-fucose isomerase (588 aa).

Active-site proton acceptor residues include E335 and D359. The Mn(2+) site is built by E335, D359, and H525.

Belongs to the L-fucose isomerase family. Requires Mn(2+) as cofactor.

It is found in the cytoplasm. The enzyme catalyses L-fucose = L-fuculose. It functions in the pathway carbohydrate degradation; L-fucose degradation; L-lactaldehyde and glycerone phosphate from L-fucose: step 1/3. Converts the aldose L-fucose into the corresponding ketose L-fuculose. This Streptococcus pneumoniae (strain 70585) protein is L-fucose isomerase.